The primary structure comprises 402 residues: 4-hydroxy-3-methylbut-2-enyl diphosphate reductase (402 aa).

Residue cysteine 66 participates in [4Fe-4S] cluster binding. A (2E)-4-hydroxy-3-methylbut-2-enyl diphosphate-binding site is contributed by histidine 96. Residue histidine 96 coordinates dimethylallyl diphosphate. Residue histidine 96 participates in isopentenyl diphosphate binding. Residue cysteine 157 participates in [4Fe-4S] cluster binding. Histidine 185 serves as a coordination point for (2E)-4-hydroxy-3-methylbut-2-enyl diphosphate. Dimethylallyl diphosphate is bound at residue histidine 185. Histidine 185 contributes to the isopentenyl diphosphate binding site. Glutamate 187 functions as the Proton donor in the catalytic mechanism. Threonine 250 contacts (2E)-4-hydroxy-3-methylbut-2-enyl diphosphate. Cysteine 288 is a [4Fe-4S] cluster binding site. (2E)-4-hydroxy-3-methylbut-2-enyl diphosphate-binding residues include serine 317, serine 318, asparagine 319, and serine 379. Dimethylallyl diphosphate-binding residues include serine 317, serine 318, asparagine 319, and serine 379. Residues serine 317, serine 318, asparagine 319, and serine 379 each coordinate isopentenyl diphosphate.

This sequence belongs to the IspH family. Requires [4Fe-4S] cluster as cofactor.

It carries out the reaction isopentenyl diphosphate + 2 oxidized [2Fe-2S]-[ferredoxin] + H2O = (2E)-4-hydroxy-3-methylbut-2-enyl diphosphate + 2 reduced [2Fe-2S]-[ferredoxin] + 2 H(+). The catalysed reaction is dimethylallyl diphosphate + 2 oxidized [2Fe-2S]-[ferredoxin] + H2O = (2E)-4-hydroxy-3-methylbut-2-enyl diphosphate + 2 reduced [2Fe-2S]-[ferredoxin] + 2 H(+). It participates in isoprenoid biosynthesis; dimethylallyl diphosphate biosynthesis; dimethylallyl diphosphate from (2E)-4-hydroxy-3-methylbutenyl diphosphate: step 1/1. It functions in the pathway isoprenoid biosynthesis; isopentenyl diphosphate biosynthesis via DXP pathway; isopentenyl diphosphate from 1-deoxy-D-xylulose 5-phosphate: step 6/6. Functionally, catalyzes the conversion of 1-hydroxy-2-methyl-2-(E)-butenyl 4-diphosphate (HMBPP) into a mixture of isopentenyl diphosphate (IPP) and dimethylallyl diphosphate (DMAPP). Acts in the terminal step of the DOXP/MEP pathway for isoprenoid precursor biosynthesis. The chain is 4-hydroxy-3-methylbut-2-enyl diphosphate reductase from Trichormus variabilis (strain ATCC 29413 / PCC 7937) (Anabaena variabilis).